Consider the following 405-residue polypeptide: Argininosuccinate synthase (405 aa).

ATP is bound by residues 11 to 19 and alanine 38; that span reads AYSGGLDTS. Positions 91 and 96 each coordinate L-citrulline. Glycine 121 provides a ligand contact to ATP. L-aspartate-binding residues include threonine 123, asparagine 127, and aspartate 128. Asparagine 127 is an L-citrulline binding site. L-citrulline-binding residues include arginine 131, serine 181, serine 190, glutamate 266, and tyrosine 278.

Belongs to the argininosuccinate synthase family. Type 1 subfamily. Homotetramer.

The protein resides in the cytoplasm. It catalyses the reaction L-citrulline + L-aspartate + ATP = 2-(N(omega)-L-arginino)succinate + AMP + diphosphate + H(+). It functions in the pathway amino-acid biosynthesis; L-arginine biosynthesis; L-arginine from L-ornithine and carbamoyl phosphate: step 2/3. This Nitratiruptor sp. (strain SB155-2) protein is Argininosuccinate synthase.